We begin with the raw amino-acid sequence, 130 residues long: MSMQDPIADMLTRIRNGQAASKVAVSMPSSKLKVAIAKVLKEEGYITGYSVAGDVKPELEIELKYFQGKPVVELIQRVSRPGLRIYKRTTDLPKVMGGLGVAIVSTSKGVMTDRAARKASMGGEIICYVA.

This sequence belongs to the universal ribosomal protein uS8 family. In terms of assembly, part of the 30S ribosomal subunit. Contacts proteins S5 and S12.

Functionally, one of the primary rRNA binding proteins, it binds directly to 16S rRNA central domain where it helps coordinate assembly of the platform of the 30S subunit. This chain is Small ribosomal subunit protein uS8, found in Aeromonas hydrophila subsp. hydrophila (strain ATCC 7966 / DSM 30187 / BCRC 13018 / CCUG 14551 / JCM 1027 / KCTC 2358 / NCIMB 9240 / NCTC 8049).